The chain runs to 421 residues: Serine hydroxymethyltransferase (421 aa).

Residues L121 and G125–L127 each bind (6S)-5,6,7,8-tetrahydrofolate. K229 is subject to N6-(pyridoxal phosphate)lysine.

This sequence belongs to the SHMT family. In terms of assembly, homodimer. Pyridoxal 5'-phosphate is required as a cofactor.

It is found in the cytoplasm. It catalyses the reaction (6R)-5,10-methylene-5,6,7,8-tetrahydrofolate + glycine + H2O = (6S)-5,6,7,8-tetrahydrofolate + L-serine. The protein operates within one-carbon metabolism; tetrahydrofolate interconversion. It participates in amino-acid biosynthesis; glycine biosynthesis; glycine from L-serine: step 1/1. Functionally, catalyzes the reversible interconversion of serine and glycine with tetrahydrofolate (THF) serving as the one-carbon carrier. This reaction serves as the major source of one-carbon groups required for the biosynthesis of purines, thymidylate, methionine, and other important biomolecules. Also exhibits THF-independent aldolase activity toward beta-hydroxyamino acids, producing glycine and aldehydes, via a retro-aldol mechanism. The sequence is that of Serine hydroxymethyltransferase from Haemophilus influenzae (strain ATCC 51907 / DSM 11121 / KW20 / Rd).